Consider the following 109-residue polypeptide: ATPase inhibitor mai-2, mitochondrial (109 aa).

Disordered stretches follow at residues 17-39 (RFST…SIRD) and 73-95 (QEVD…HQKR). Residues 21–35 (GGHGDGAGRGGGSGG) are compositionally biased toward gly residues. Positions 45–109 (GKMEAAREDE…EAEERALGKE (65 aa)) form a coiled coil.

The protein belongs to the ATPase inhibitor family.

It localises to the mitochondrion. Functionally, thought to be a regulatory component of the ATP-synthesizing complex in the mitochondria. The polypeptide is ATPase inhibitor mai-2, mitochondrial (Caenorhabditis briggsae).